The chain runs to 223 residues: Deoxyribose-phosphate aldolase (223 aa).

Residue D89 is the Proton donor/acceptor of the active site. K152 acts as the Schiff-base intermediate with acetaldehyde in catalysis. Residue K181 is the Proton donor/acceptor of the active site.

The protein belongs to the DeoC/FbaB aldolase family. DeoC type 1 subfamily.

It is found in the cytoplasm. The enzyme catalyses 2-deoxy-D-ribose 5-phosphate = D-glyceraldehyde 3-phosphate + acetaldehyde. It functions in the pathway carbohydrate degradation; 2-deoxy-D-ribose 1-phosphate degradation; D-glyceraldehyde 3-phosphate and acetaldehyde from 2-deoxy-alpha-D-ribose 1-phosphate: step 2/2. Catalyzes a reversible aldol reaction between acetaldehyde and D-glyceraldehyde 3-phosphate to generate 2-deoxy-D-ribose 5-phosphate. The protein is Deoxyribose-phosphate aldolase of Bacillus cytotoxicus (strain DSM 22905 / CIP 110041 / 391-98 / NVH 391-98).